Consider the following 294-residue polypeptide: Metallophosphoesterase MPPED2 (294 aa).

Residues Asp-65, His-67, Asp-86, Asn-117, and His-213 each coordinate Mn(2+). Position 117 to 118 (Asn-117 to His-118) interacts with GMP. Residues Lys-225–Glu-226 and His-254–Glu-255 each bind GMP. His-254 is a Mn(2+) binding site.

The protein belongs to the UPF0046 family. In terms of assembly, homodimer. Mn(2+) serves as cofactor. It depends on Co(2+) as a cofactor. As to expression, expressed in fetal brain (at protein level). detected in fetal and adult brain.

Inhibited by nmolar levels of AMP and GMP. In terms of biological role, displays low metallophosphoesterase activity (in vitro). May play a role in the development of the nervous system. This Rattus norvegicus (Rat) protein is Metallophosphoesterase MPPED2 (Mpped2).